The chain runs to 229 residues: MTKKKAFTPLLYLVSIVFLPWWLSLSFNKSLESWVNNWWNAGQSEIFLNDIQEKSILEKFIELEELLVLDELIEEYSETHLQKFRIGIQKEAIQLINIYNEGRIHTILHFSTNIICFVILSGFSILGNEELVILNSWTQKFLYNLSDTVKAFSILLLTDLCIGFHSPHGWELMVGSVYKDLGFVHNDQIISGLVSTFPVILDTIFKYWIFRYLNRVSPSLVVIYHSMND.

4 consecutive transmembrane segments (helical) span residues 7 to 27 (FTPLLYLVSIVFLPWWLSLSF), 114 to 134 (IICFVILSGFSILGNEELVIL), 154 to 174 (ILLLTDLCIGFHSPHGWELMV), and 189 to 209 (IISGLVSTFPVILDTIFKYWI).

The protein belongs to the CemA family.

Its subcellular location is the plastid. It localises to the chloroplast inner membrane. It catalyses the reaction K(+)(in) + H(+)(out) = K(+)(out) + H(+)(in). Contributes to K(+)/H(+) antiport activity by supporting proton efflux to control proton extrusion and homeostasis in chloroplasts in a light-dependent manner to modulate photosynthesis. Prevents excessive induction of non-photochemical quenching (NPQ) under continuous-light conditions. Indirectly promotes efficient inorganic carbon uptake into chloroplasts. The polypeptide is Potassium/proton antiporter CemA (Coffea arabica (Arabian coffee)).